Reading from the N-terminus, the 265-residue chain is Undecaprenyl-diphosphatase 1 (265 aa).

The next 7 helical transmembrane spans lie at 4–24, 42–62, 84–104, 108–128, 184–204, 217–237, and 245–265; these read IITA…PISS, AKTF…ILYH, FHVF…HDVI, LFQP…MIFA, SEFS…LDLL, MFAV…VTFL, and LKPF…FVLL.

It belongs to the UppP family.

The protein localises to the cell membrane. The enzyme catalyses di-trans,octa-cis-undecaprenyl diphosphate + H2O = di-trans,octa-cis-undecaprenyl phosphate + phosphate + H(+). In terms of biological role, catalyzes the dephosphorylation of undecaprenyl diphosphate (UPP). Confers resistance to bacitracin. The polypeptide is Undecaprenyl-diphosphatase 1 (Bacillus anthracis).